The following is a 500-amino-acid chain: Trans-cinnamate 4-monooxygenase (500 aa).

The chain crosses the membrane as a helical span at residues 3–23 (ALLVEKVLLGLFVAAVLALVV). Residues 213 to 218 (RSRLSQ) and Ala302 each bind (E)-cinnamate. Cys442 serves as a coordination point for heme.

It belongs to the cytochrome P450 family. Requires heme as cofactor. In terms of tissue distribution, expressed in roots and leaves.

It is found in the membrane. It carries out the reaction (E)-cinnamate + reduced [NADPH--hemoprotein reductase] + O2 = (E)-4-coumarate + oxidized [NADPH--hemoprotein reductase] + H2O + H(+). It participates in phenylpropanoid metabolism; trans-4-coumarate biosynthesis; trans-4-coumarate from trans-cinnamate: step 1/1. Functionally, catalyzes the first oxidative step of the phenylpropanoid pathway in higher plants by transforming trans-cinnamate into p-coumarate. The compounds formed by this pathway are essential components for lignification, pollination, and defense against ultraviolet light, predators and pathogens. In Oryza sativa subsp. japonica (Rice), this protein is Trans-cinnamate 4-monooxygenase.